The following is a 92-amino-acid chain: Small ribosomal subunit protein uS19 (92 aa).

Belongs to the universal ribosomal protein uS19 family.

In terms of biological role, protein S19 forms a complex with S13 that binds strongly to the 16S ribosomal RNA. The protein is Small ribosomal subunit protein uS19 of Nostoc punctiforme (strain ATCC 29133 / PCC 73102).